Consider the following 579-residue polypeptide: MNAIVALCHFCELHGPRTLFCTEVLHAPLPQGDGNEDSPGQGEQAEEEEGGIQMNSRMRAHSPAEGASVESSSPGPKKSDMCEGCRSLAAGHPGYISHDKETSIKYVSHQHPSHPQLFSIVRQACVRSLSCEVCPGREGPIFFGDEQHGFVFSHTFFIKDSLARGFQRWYSIITIMMDRIYLINSWPFLLGKVRGIIDELQGKALKVFEAEQFGCPQRAQRMNTAFTPFLHQRNGNAARSLTSLTSDDNLWACLHTSFAWLLKACGSRLTEKLLEGAPTEDTLVQMEKLADLEEESESWDNSEAEEEEKAPVLPESTEGRELTQGPAESSSLSGCGSWQPRKLPVFKSLRHMRQVLGAPSFRMLAWHVLMGNQVIWKSRDVDLVQSAFEVLRTMLPVGCVRIIPYSSQYEEAYRCNFLGLSPHVQIPPHVLSSEFAVIVEVHAAARSTLHPVGCEDDQSLSKYEFVVTSGSPVAADRVGPTILNKIEAALTNQNLSVDVVDQCLVCLKEEWMNKVKVLFKFTKVDSRPKEDTQKLLSILGASEEDNVKLLKFWMTGLSKTYKSHLMSTVRSPTASESRN.

The disordered stretch occupies residues 30 to 81 (PQGDGNEDSPGQGEQAEEEEGGIQMNSRMRAHSPAEGASVESSSPGPKKSDM). Phosphoserine occurs at positions 62 and 73. One can recognise a uDENN FLCN/SMCR8-type domain in the interval 86–242 (RSLAAGHPGY…RNGNAARSLT (157 aa)). The segment at 210–220 (AEQFGCPQRAQ) is essential for interaction with LDHA. A coiled-coil region spans residues 287 to 310 (EKLADLEEESESWDNSEAEEEEKA). The segment covering 294–308 (EESESWDNSEAEEEE) has biased composition (acidic residues). The tract at residues 294 to 337 (EESESWDNSEAEEEEKAPVLPESTEGRELTQGPAESSSLSGCGS) is disordered. Residue Ser-302 is modified to Phosphoserine. Polar residues predominate over residues 326 to 336 (PAESSSLSGCG). Positions 339–491 (QPRKLPVFKS…ILNKIEAALT (153 aa)) constitute a cDENN FLCN/SMCR8-type domain. 3 positions are modified to phosphoserine; by ULK1: Ser-406, Ser-537, and Ser-542. Positions 493–558 (QNLSVDVVDQ…LLKFWMTGLS (66 aa)) constitute a dDENN FLCN/SMCR8-type domain. At Ser-571 the chain carries Phosphoserine.

This sequence belongs to the folliculin family. Interacts (via C-terminus) with FNIP1 or FNIP2 (via C-terminus). Component of the lysosomal folliculin complex (LFC), composed of FLCN, FNIP1 (or FNIP2), RagA/RRAGA or RagB/RRAGB GDP-bound, RagC/RRAGC or RagD/RRAGD GTP-bound, and Ragulator. Interaction with FNIP1 or FNIP2 mediates indirect interaction with the PRKAA1, PRKAB1 and PRKAG1 subunits of 5'-AMP-activated protein kinase (AMPK). Interacts with HSP90AA1 in the presence of FNIP1. Interacts with HSP70, STUB1, CDC37, AHSA1, CCT2, STIP1, PTGES3 and PPP5C. Interacts with GABARAP; interaction takes place in the presence of FNIP1 and/or FNIP2. Interacts with RILP; the interaction is direct and promotes association between RILP and RAB34. Interacts with KIF3A and KIF3B. Interacts with lactate dehydrogenase LDHA, but not LDHB; the interaction is direct, may preferentially bind LDHA dimers rather than tetramers, and regulates LDHA activity, acting as an uncompetitive inhibitor. Post-translationally, phosphorylation by ULK1 modulates the interaction with GABARAP and is required to regulate autophagy. Expressed in most tissues tested, including skin, lung, kidney, heart, testis and stomach.

The protein resides in the lysosome membrane. The protein localises to the cytoplasm. Its subcellular location is the cytosol. It is found in the cell projection. It localises to the cilium. The protein resides in the cytoskeleton. The protein localises to the microtubule organizing center. Its subcellular location is the centrosome. It is found in the spindle. It localises to the nucleus. GTPase-activating activity is inhibited in the folliculin complex (LFC), which stabilizes the GDP-bound state of RagA/RRAGA (or RagB/RRAGB), because Arg-164 is located far from the RagC/RRAGC or RagD/RRAGD nucleotide pocket. Disassembly of the LFC complex upon amino acid restimulation liberates the GTPase-activating activity. In terms of biological role, multi-functional protein, involved in both the cellular response to amino acid availability and in the regulation of glycolysis. GTPase-activating protein that plays a key role in the cellular response to amino acid availability through regulation of the non-canonical mTORC1 signaling cascade controlling the MiT/TFE factors TFEB and TFE3. Activates mTORC1 by acting as a GTPase-activating protein: specifically stimulates GTP hydrolysis by RagC/RRAGC or RagD/RRAGD, promoting the conversion to the GDP-bound state of RagC/RRAGC or RagD/RRAGD, and thereby activating the kinase activity of mTORC1. The GTPase-activating activity is inhibited during starvation and activated in presence of nutrients. Acts as a key component for non-canonical mTORC1-dependent control of the MiT/TFE factors TFEB and TFE3, while it is not involved in mTORC1-dependent phosphorylation of canonical RPS6KB1/S6K1 and EIF4EBP1/4E-BP1. In low-amino acid conditions, the lysosomal folliculin complex (LFC) is formed on the membrane of lysosomes, which inhibits the GTPase-activating activity of FLCN, inactivates mTORC1 and maximizes nuclear translocation of TFEB and TFE3. Upon amino acid restimulation, RagA/RRAGA (or RagB/RRAGB) nucleotide exchange promotes disassembly of the LFC complex and liberates the GTPase-activating activity of FLCN, leading to activation of mTORC1 and subsequent cytoplasmic retention of TFEB and TFE3. Indirectly acts as a positive regulator of Wnt signaling by promoting mTOR-dependent cytoplasmic retention of MiT/TFE factor TFE3. Required for the exit of hematopoietic stem cell from pluripotency by promoting mTOR-dependent cytoplasmic retention of TFE3, thereby increasing Wnt signaling. Acts as an inhibitor of browning of adipose tissue by regulating mTOR-dependent cytoplasmic retention of TFE3. Involved in the control of embryonic stem cells differentiation; together with LAMTOR1 it is necessary to recruit and activate RagC/RRAGC and RagD/RRAGD at the lysosomes, and to induce exit of embryonic stem cells from pluripotency via non-canonical, mTOR-independent TFE3 inactivation. In response to flow stress, regulates STK11/LKB1 accumulation and mTORC1 activation through primary cilia: may act by recruiting STK11/LKB1 to primary cilia for activation of AMPK resided at basal bodies, causing mTORC1 down-regulation. Together with FNIP1 and/or FNIP2, regulates autophagy: following phosphorylation by ULK1, interacts with GABARAP and promotes autophagy. Required for starvation-induced perinuclear clustering of lysosomes by promoting association of RILP with its effector RAB34. Regulates glycolysis by binding to lactate dehydrogenase LDHA, acting as an uncompetitive inhibitor. The polypeptide is Folliculin (Homo sapiens (Human)).